A 260-amino-acid polypeptide reads, in one-letter code: Carbonic anhydrase 2 (260 aa).

N-acetylserine is present on S2. S2 carries the post-translational modification Phosphoserine. Positions 3 to 259 (HHWGYGEHNG…LKNRQVRVFP (257 aa)) constitute an Alpha-carbonic anhydrase domain. H64 (proton donor/acceptor) is an active-site residue. 3 residues coordinate Zn(2+): H94, H96, and H119. Residues S165 and S172 each carry the phosphoserine modification. 198–199 (TN) is a binding site for substrate.

Belongs to the alpha-carbonic anhydrase family. As to quaternary structure, interacts with SLC4A4 and SLC26A6. Interaction with SLC4A7 regulates SLC4A7 transporter activity. Zn(2+) serves as cofactor.

Its subcellular location is the cytoplasm. The protein localises to the cell membrane. The catalysed reaction is hydrogencarbonate + H(+) = CO2 + H2O. The enzyme catalyses urea = cyanamide + H2O. With respect to regulation, inhibited by acetazolamide. Catalyzes the reversible hydration of carbon dioxide. Can also hydrate cyanamide to urea. Involved in the regulation of fluid secretion into the anterior chamber of the eye. Essential for bone resorption and osteoclast differentiation. Contributes to intracellular pH regulation in the duodenal upper villous epithelium during proton-coupled peptide absorption. Stimulates the chloride-bicarbonate exchange activity of SLC26A6. This Ovis aries (Sheep) protein is Carbonic anhydrase 2 (CA2).